The chain runs to 368 residues: Glutamate 5-kinase (368 aa).

Residue Lys-9 coordinates ATP. 3 residues coordinate substrate: Ser-49, Asp-136, and Asn-148. Residues 168–169 (TD) and 210–216 (TGGMMTK) each bind ATP. The PUA domain maps to 275–353 (AGIITIDNGA…ADIENVLGYE (79 aa)).

The protein belongs to the glutamate 5-kinase family.

It localises to the cytoplasm. The enzyme catalyses L-glutamate + ATP = L-glutamyl 5-phosphate + ADP. It participates in amino-acid biosynthesis; L-proline biosynthesis; L-glutamate 5-semialdehyde from L-glutamate: step 1/2. Its function is as follows. Catalyzes the transfer of a phosphate group to glutamate to form L-glutamate 5-phosphate. This chain is Glutamate 5-kinase, found in Haemophilus influenzae (strain ATCC 51907 / DSM 11121 / KW20 / Rd).